The primary structure comprises 452 residues: Cobyrinate a,c-diamide synthase (452 aa).

Residues 244–437 (KIAYAYDEAF…VHINLYTYKE (194 aa)) form the GATase cobBQ-type domain. The Nucleophile role is filled by C327.

The protein belongs to the CobB/CbiA family. The cofactor is Mg(2+).

The enzyme catalyses cob(II)yrinate + 2 L-glutamine + 2 ATP + 2 H2O = cob(II)yrinate a,c diamide + 2 L-glutamate + 2 ADP + 2 phosphate + 2 H(+). It functions in the pathway cofactor biosynthesis; adenosylcobalamin biosynthesis; cob(II)yrinate a,c-diamide from sirohydrochlorin (anaerobic route): step 10/10. In terms of biological role, catalyzes the ATP-dependent amidation of the two carboxylate groups at positions a and c of cobyrinate, using either L-glutamine or ammonia as the nitrogen source. The polypeptide is Cobyrinate a,c-diamide synthase (Caldanaerobacter subterraneus subsp. tengcongensis (strain DSM 15242 / JCM 11007 / NBRC 100824 / MB4) (Thermoanaerobacter tengcongensis)).